Consider the following 673-residue polypeptide: DNA ligase (673 aa).

NAD(+) is bound by residues 33–37 (DAEYD), 82–83 (SL), and glutamate 115. Lysine 117 acts as the N6-AMP-lysine intermediate in catalysis. NAD(+) is bound by residues arginine 138, glutamate 175, lysine 292, and lysine 316. The Zn(2+) site is built by cysteine 410, cysteine 413, cysteine 428, and cysteine 434. The region spanning 593-673 (VGDNPFKEKT…TFLAWSKPYL (81 aa)) is the BRCT domain.

Belongs to the NAD-dependent DNA ligase family. LigA subfamily. Requires Mg(2+) as cofactor. Mn(2+) serves as cofactor.

It catalyses the reaction NAD(+) + (deoxyribonucleotide)n-3'-hydroxyl + 5'-phospho-(deoxyribonucleotide)m = (deoxyribonucleotide)n+m + AMP + beta-nicotinamide D-nucleotide.. In terms of biological role, DNA ligase that catalyzes the formation of phosphodiester linkages between 5'-phosphoryl and 3'-hydroxyl groups in double-stranded DNA using NAD as a coenzyme and as the energy source for the reaction. It is essential for DNA replication and repair of damaged DNA. This Pasteurella multocida (strain Pm70) protein is DNA ligase.